A 167-amino-acid chain; its full sequence is Large ribosomal subunit protein uL10 (167 aa).

This sequence belongs to the universal ribosomal protein uL10 family. Part of the ribosomal stalk of the 50S ribosomal subunit. The N-terminus interacts with L11 and the large rRNA to form the base of the stalk. The C-terminus forms an elongated spine to which L12 dimers bind in a sequential fashion forming a multimeric L10(L12)X complex.

Functionally, forms part of the ribosomal stalk, playing a central role in the interaction of the ribosome with GTP-bound translation factors. This is Large ribosomal subunit protein uL10 from Dichelobacter nodosus (strain VCS1703A).